A 142-amino-acid chain; its full sequence is Large ribosomal subunit protein uL11 (142 aa).

It belongs to the universal ribosomal protein uL11 family. In terms of assembly, part of the ribosomal stalk of the 50S ribosomal subunit. Interacts with L10 and the large rRNA to form the base of the stalk. L10 forms an elongated spine to which L12 dimers bind in a sequential fashion forming a multimeric L10(L12)X complex. One or more lysine residues are methylated.

Functionally, forms part of the ribosomal stalk which helps the ribosome interact with GTP-bound translation factors. The polypeptide is Large ribosomal subunit protein uL11 (Shewanella pealeana (strain ATCC 700345 / ANG-SQ1)).